The following is a 226-amino-acid chain: Glutathione peroxidase 3 (226 aa).

A signal peptide spans 1–24; it reads MARLLQASCLLSLLLAGFLPQSRG. Residue U73 is part of the active site. Residue U73 is a non-standard amino acid, selenocysteine.

The protein belongs to the glutathione peroxidase family. In terms of assembly, homotetramer. In terms of tissue distribution, expressed intensively in the kidney and adrenal gland, and weakly in the cerebellum, heart, and lung. Secreted in plasma.

Its subcellular location is the secreted. The catalysed reaction is 2 glutathione + H2O2 = glutathione disulfide + 2 H2O. It carries out the reaction tert-butyl hydroperoxide + 2 glutathione = tert-butanol + glutathione disulfide + H2O. Protects cells and enzymes from oxidative damage, by catalyzing the reduction of hydrogen peroxide, lipid peroxides and organic hydroperoxide, by glutathione. This is Glutathione peroxidase 3 from Macaca fuscata fuscata (Japanese macaque).